Reading from the N-terminus, the 113-residue chain is Flagellar transcriptional regulator FlhD (113 aa).

The protein belongs to the FlhD family. Homodimer; disulfide-linked. Forms a heterohexamer composed of two FlhC and four FlhD subunits. Each FlhC binds a FlhD dimer, forming a heterotrimer, and a hexamer assembles by dimerization of two heterotrimers.

The protein localises to the cytoplasm. Its function is as follows. Functions in complex with FlhC as a master transcriptional regulator that regulates transcription of several flagellar and non-flagellar operons by binding to their promoter region. Activates expression of class 2 flagellar genes, including fliA, which is a flagellum-specific sigma factor that turns on the class 3 genes. Also regulates genes whose products function in a variety of physiological pathways. This Salmonella typhi protein is Flagellar transcriptional regulator FlhD.